A 320-amino-acid polypeptide reads, in one-letter code: 4-hydroxy-3-methylbut-2-enyl diphosphate reductase (320 aa).

Cysteine 12 lines the [4Fe-4S] cluster pocket. 2 residues coordinate (2E)-4-hydroxy-3-methylbut-2-enyl diphosphate: histidine 41 and histidine 74. 2 residues coordinate dimethylallyl diphosphate: histidine 41 and histidine 74. Positions 41 and 74 each coordinate isopentenyl diphosphate. Cysteine 96 is a binding site for [4Fe-4S] cluster. Residue histidine 124 participates in (2E)-4-hydroxy-3-methylbut-2-enyl diphosphate binding. Histidine 124 serves as a coordination point for dimethylallyl diphosphate. Position 124 (histidine 124) interacts with isopentenyl diphosphate. The Proton donor role is filled by glutamate 126. Residue threonine 167 participates in (2E)-4-hydroxy-3-methylbut-2-enyl diphosphate binding. Cysteine 197 is a binding site for [4Fe-4S] cluster. (2E)-4-hydroxy-3-methylbut-2-enyl diphosphate-binding residues include serine 225, serine 226, asparagine 227, and serine 269. 4 residues coordinate dimethylallyl diphosphate: serine 225, serine 226, asparagine 227, and serine 269. Isopentenyl diphosphate contacts are provided by serine 225, serine 226, asparagine 227, and serine 269.

The protein belongs to the IspH family. Requires [4Fe-4S] cluster as cofactor.

The enzyme catalyses isopentenyl diphosphate + 2 oxidized [2Fe-2S]-[ferredoxin] + H2O = (2E)-4-hydroxy-3-methylbut-2-enyl diphosphate + 2 reduced [2Fe-2S]-[ferredoxin] + 2 H(+). It carries out the reaction dimethylallyl diphosphate + 2 oxidized [2Fe-2S]-[ferredoxin] + H2O = (2E)-4-hydroxy-3-methylbut-2-enyl diphosphate + 2 reduced [2Fe-2S]-[ferredoxin] + 2 H(+). It participates in isoprenoid biosynthesis; dimethylallyl diphosphate biosynthesis; dimethylallyl diphosphate from (2E)-4-hydroxy-3-methylbutenyl diphosphate: step 1/1. Its pathway is isoprenoid biosynthesis; isopentenyl diphosphate biosynthesis via DXP pathway; isopentenyl diphosphate from 1-deoxy-D-xylulose 5-phosphate: step 6/6. In terms of biological role, catalyzes the conversion of 1-hydroxy-2-methyl-2-(E)-butenyl 4-diphosphate (HMBPP) into a mixture of isopentenyl diphosphate (IPP) and dimethylallyl diphosphate (DMAPP). Acts in the terminal step of the DOXP/MEP pathway for isoprenoid precursor biosynthesis. This chain is 4-hydroxy-3-methylbut-2-enyl diphosphate reductase, found in Francisella tularensis subsp. novicida (strain U112).